We begin with the raw amino-acid sequence, 260 residues long: Imidazole glycerol phosphate synthase subunit HisF (260 aa).

Active-site residues include Asp-11 and Asp-130.

Belongs to the HisA/HisF family. In terms of assembly, heterodimer of HisH and HisF.

The protein localises to the cytoplasm. It carries out the reaction 5-[(5-phospho-1-deoxy-D-ribulos-1-ylimino)methylamino]-1-(5-phospho-beta-D-ribosyl)imidazole-4-carboxamide + L-glutamine = D-erythro-1-(imidazol-4-yl)glycerol 3-phosphate + 5-amino-1-(5-phospho-beta-D-ribosyl)imidazole-4-carboxamide + L-glutamate + H(+). Its pathway is amino-acid biosynthesis; L-histidine biosynthesis; L-histidine from 5-phospho-alpha-D-ribose 1-diphosphate: step 5/9. In terms of biological role, IGPS catalyzes the conversion of PRFAR and glutamine to IGP, AICAR and glutamate. The HisF subunit catalyzes the cyclization activity that produces IGP and AICAR from PRFAR using the ammonia provided by the HisH subunit. In Endomicrobium trichonymphae, this protein is Imidazole glycerol phosphate synthase subunit HisF.